Consider the following 370-residue polypeptide: Developmentally-regulated GTP-binding protein 1 homolog (370 aa).

Residues 65 to 292 enclose the OBG-type G domain; sequence ARVGLIGFPS…LLDKIWEYLK (228 aa). Residues 71 to 78, 117 to 121, and 250 to 253 contribute to the GTP site; these read GFPSVGKS, DLPGI, and NKID. Residues 292–369 enclose the TGS domain; the sequence is KLIRVYTKPK…ADEDIVQIVK (78 aa).

The protein belongs to the TRAFAC class OBG-HflX-like GTPase superfamily. OBG GTPase family.

The polypeptide is Developmentally-regulated GTP-binding protein 1 homolog (drg1) (Dictyostelium discoideum (Social amoeba)).